A 133-amino-acid chain; its full sequence is SGSCEMKTCWKSMPTFGDIGQVLKEKFDGATEVQSLKIGSRQQLVPTQRDFKPHTSSDLVYLVPSPDFCEEDLKVSIPVGLTFSHPPNQGSLGTHGRRCNKTSKAIDGCELMCCGRGFNTHIEEVIERCSCKF.

Ser-1 carries O-palmitoleoyl serine; by PORCN lipidation. Intrachain disulfides connect Cys-69–Cys-114 and Cys-99–Cys-109. N-linked (GlcNAc...) asparagine glycosylation is present at Asn-100.

It belongs to the Wnt family. Post-translationally, palmitoleoylation is required for efficient binding to frizzled receptors. Depalmitoleoylation leads to Wnt signaling pathway inhibition.

Its subcellular location is the secreted. The protein resides in the extracellular space. The protein localises to the extracellular matrix. Its function is as follows. Ligand for members of the frizzled family of seven transmembrane receptors. Plays an important role in embryonic development. This Strongylocentrotus purpuratus (Purple sea urchin) protein is Protein Wnt-4 (WNT-4).